A 388-amino-acid chain; its full sequence is GTPase Obg (388 aa).

Residues 1–159 (MKFVDEATIR…RSLRLELMLL (159 aa)) enclose the Obg domain. The 174-residue stretch at 160 to 333 (ADVGLLGMPN…LALKLLDFID (174 aa)) folds into the OBG-type G domain. GTP-binding positions include 166–173 (GMPNAGKS), 191–195 (FTTLV), 213–216 (DIPG), 283–286 (NKAD), and 314–316 (SAY). Positions 173 and 193 each coordinate Mg(2+). Residues 356–377 (QNANESVNEDYDDDLDDDDYDD) are disordered. Positions 362-377 (VNEDYDDDLDDDDYDD) are enriched in acidic residues.

The protein belongs to the TRAFAC class OBG-HflX-like GTPase superfamily. OBG GTPase family. In terms of assembly, monomer. The cofactor is Mg(2+).

The protein localises to the cytoplasm. An essential GTPase which binds GTP, GDP and possibly (p)ppGpp with moderate affinity, with high nucleotide exchange rates and a fairly low GTP hydrolysis rate. Plays a role in control of the cell cycle, stress response, ribosome biogenesis and in those bacteria that undergo differentiation, in morphogenesis control. The polypeptide is GTPase Obg (Shewanella piezotolerans (strain WP3 / JCM 13877)).